The primary structure comprises 120 residues: Holo-[acyl-carrier-protein] synthase (120 aa).

The Mg(2+) site is built by D8 and E60.

It belongs to the P-Pant transferase superfamily. AcpS family. Requires Mg(2+) as cofactor.

It localises to the cytoplasm. The enzyme catalyses apo-[ACP] + CoA = holo-[ACP] + adenosine 3',5'-bisphosphate + H(+). Transfers the 4'-phosphopantetheine moiety from coenzyme A to a Ser of acyl-carrier-protein. The protein is Holo-[acyl-carrier-protein] synthase of Anaplasma marginale (strain Florida).